The primary structure comprises 284 residues: NAD kinase (284 aa).

The Proton acceptor role is filled by Asp-60. NAD(+) contacts are provided by residues 60–61 (DG), 134–135 (NE), Arg-145, Lys-162, Asp-164, 175–180 (TAYSFS), and Gln-234.

Belongs to the NAD kinase family. Requires a divalent metal cation as cofactor.

The protein localises to the cytoplasm. It carries out the reaction NAD(+) + ATP = ADP + NADP(+) + H(+). In terms of biological role, involved in the regulation of the intracellular balance of NAD and NADP, and is a key enzyme in the biosynthesis of NADP. Catalyzes specifically the phosphorylation on 2'-hydroxyl of the adenosine moiety of NAD to yield NADP. In Clostridium botulinum (strain Eklund 17B / Type B), this protein is NAD kinase.